Consider the following 271-residue polypeptide: Hachiman protein HamA (271 aa).

Its function is as follows. Component of antiviral defense system Hachiman, composed of HamA and HamB. Expression of Hachiman in B.subtilis (strain BEST7003) confers resistance to phages phi105, phi29, phi3T, rho14, SBSphiJ, SpBeta and SPR. The polypeptide is Hachiman protein HamA (Bacillus cereus).